Here is a 213-residue protein sequence, read N- to C-terminus: Ras-related protein Rab-39B (213 aa).

GTP is bound by residues Ser-17, Gly-20, Lys-21, Ser-22, Cys-23, Ser-37, and Thr-40. Residue Ser-22 coordinates Mg(2+). Positions 35–43 are switch-I; sequence QVSDPTVGV. Positions 40 and 64 each coordinate Mg(2+). Positions 67, 123, 124, 126, 154, and 155 each coordinate GTP. The segment at 67 to 83 is switch-II; that stretch reads GQERFRSITRAYYRNSV. Ser-201 is subject to Phosphoserine. S-geranylgeranyl cysteine attachment occurs at residues Cys-211 and Cys-213. Cys-213 bears the Cysteine methyl ester mark.

The protein belongs to the small GTPase superfamily. Rab family. As to quaternary structure, interacts (GDP-bound) with C9orf72; C9orf72 in complex with SMCR8 acts as a GEF for RAB39B. Interacts (in GTP-bound form) with PICK1 (via PDZ domain); a PICK1 homodimer may allow simultaneous association of RAB39B and GRIA2 to PICK1 which is involved in GRIA2 trafficking. Interacts with isoform c of RASSF1; the interaction is strong. Interacts with isoform a of RASSF1; the interaction is weak. Interacts with the DLG4/PSD-95. Interacts (GTP-bound) with HOPS complex components VPS39 and VPS41. It depends on Mg(2+) as a cofactor.

The protein localises to the cell membrane. The protein resides in the cytoplasmic vesicle membrane. It localises to the golgi apparatus. It is found in the cytoplasmic vesicle. Its subcellular location is the autophagosome membrane. The protein localises to the autolysosome membrane. The catalysed reaction is GTP + H2O = GDP + phosphate + H(+). Its activity is regulated as follows. Regulated by guanine nucleotide exchange factors (GEFs) including C9orf72-SMCR8 complex, which promote the exchange of bound GDP for free GTP. Regulated by GTPase activating proteins (GAPs) which increase the GTP hydrolysis activity. Inhibited by GDP dissociation inhibitors (GDIs). Functionally, the small GTPases Rab are key regulators of intracellular membrane trafficking, from the formation of transport vesicles to their fusion with membranes. Rabs cycle between an inactive GDP-bound form and an active GTP-bound form that is able to recruit to membranes different sets of downstream effectors directly responsible for vesicle formation, movement, tethering and fusion. RAB39B is involved in autophagy and may function in autophagosome formation. Binds downstream effector PICK1 to ensure selectively GRIA2 exit from the endoplasmic reticulum to the Golgi and to regulate AMPAR composition at the post-synapses and thus synaptic transmission. May regulate the homeostasis of SNCA/alpha-synuclein. This is Ras-related protein Rab-39B (RAB39B) from Bos taurus (Bovine).